The primary structure comprises 77 residues: Translation initiation factor IF-1, chloroplastic (77 aa).

In terms of domain architecture, S1-like spans 1–71; the sequence is MKEQKWIHEG…TRGRIIYRLR (71 aa).

Belongs to the IF-1 family. As to quaternary structure, component of the 30S ribosomal translation pre-initiation complex which assembles on the 30S ribosome in the order IF-2 and IF-3, IF-1 and N-formylmethionyl-tRNA(fMet); mRNA recruitment can occur at any time during PIC assembly.

The protein resides in the plastid. Its subcellular location is the chloroplast. One of the essential components for the initiation of protein synthesis. Stabilizes the binding of IF-2 and IF-3 on the 30S subunit to which N-formylmethionyl-tRNA(fMet) subsequently binds. Helps modulate mRNA selection, yielding the 30S pre-initiation complex (PIC). Upon addition of the 50S ribosomal subunit IF-1, IF-2 and IF-3 are released leaving the mature 70S translation initiation complex. The chain is Translation initiation factor IF-1, chloroplastic from Spinacia oleracea (Spinach).